A 503-amino-acid polypeptide reads, in one-letter code: ATP synthase subunit alpha (503 aa).

ATP is bound at residue 169–176 (GDRGTGKT).

Belongs to the ATPase alpha/beta chains family. In terms of assembly, F-type ATPases have 2 components, CF(1) - the catalytic core - and CF(0) - the membrane proton channel. CF(1) has five subunits: alpha(3), beta(3), gamma(1), delta(1), epsilon(1). CF(0) has three main subunits: a(1), b(2) and c(9-12). The alpha and beta chains form an alternating ring which encloses part of the gamma chain. CF(1) is attached to CF(0) by a central stalk formed by the gamma and epsilon chains, while a peripheral stalk is formed by the delta and b chains.

The protein localises to the cell inner membrane. It catalyses the reaction ATP + H2O + 4 H(+)(in) = ADP + phosphate + 5 H(+)(out). Produces ATP from ADP in the presence of a proton gradient across the membrane. The alpha chain is a regulatory subunit. In Leptospira borgpetersenii serovar Hardjo-bovis (strain L550), this protein is ATP synthase subunit alpha.